Here is a 346-residue protein sequence, read N- to C-terminus: MQPIRYRTDLTPYNTFGLRAQARAFIALEHADGLRDIVRLPEFNRDTVLWLGGGSNILLMEDYAGLVVHMENKGIREIARSDGMVLIEAQAGEIWHDFVLHAVALGLNGLENLSLIPGTVGASPVQNIGAYGVEAKDVIHSVRCFDLDTETFVTLSNADCRFAYRESLFKQEGKGRYVIVSVVFALKTHFVPNLGYGDLAAAVAELSAGRVPTAKDVSDAVCAIRNSKLPNPNVLGNVGSFFKNPVVSAEKAATLLQRHPDMPRYPQPDGSVKLAAGWLIDQCRLKGFQIGGAAVHDRQALVLVNKNNASANDVRQLAQHIKFTVFARFQVELHAEPNWLPASFSL.

Positions 18–189 (LRAQARAFIA…VSVVFALKTH (172 aa)) constitute an FAD-binding PCMH-type domain. R165 is an active-site residue. S240 acts as the Proton donor in catalysis. Residue E336 is part of the active site.

The protein belongs to the MurB family. FAD serves as cofactor.

The protein resides in the cytoplasm. It carries out the reaction UDP-N-acetyl-alpha-D-muramate + NADP(+) = UDP-N-acetyl-3-O-(1-carboxyvinyl)-alpha-D-glucosamine + NADPH + H(+). It participates in cell wall biogenesis; peptidoglycan biosynthesis. Functionally, cell wall formation. The chain is UDP-N-acetylenolpyruvoylglucosamine reductase from Neisseria meningitidis serogroup A / serotype 4A (strain DSM 15465 / Z2491).